The chain runs to 688 residues: Translation initiation factor IF-2 (688 aa).

Positions leucine 50–glutamate 62 are enriched in basic and acidic residues. A disordered region spans residues leucine 50–asparagine 95. Residues lysine 72 to lysine 82 are compositionally biased toward low complexity. Over residues lysine 86–asparagine 95 the composition is skewed to basic and acidic residues. One can recognise a tr-type G domain in the interval lysine 187–glutamate 354. The interval glycine 196–threonine 203 is G1. Glycine 196–threonine 203 lines the GTP pocket. The tract at residues glycine 221–histidine 225 is G2. A G3 region spans residues aspartate 242 to glycine 245. GTP-binding positions include aspartate 242–histidine 246 and asparagine 296–aspartate 299. The segment at asparagine 296 to aspartate 299 is G4. The tract at residues serine 332–histidine 334 is G5.

It belongs to the TRAFAC class translation factor GTPase superfamily. Classic translation factor GTPase family. IF-2 subfamily.

It is found in the cytoplasm. One of the essential components for the initiation of protein synthesis. Protects formylmethionyl-tRNA from spontaneous hydrolysis and promotes its binding to the 30S ribosomal subunits. Also involved in the hydrolysis of GTP during the formation of the 70S ribosomal complex. In Clostridium botulinum (strain 657 / Type Ba4), this protein is Translation initiation factor IF-2.